The following is a 556-amino-acid chain: DNA ligase (556 aa).

ATP is bound at residue Glu245. Lys247 (N6-AMP-lysine intermediate) is an active-site residue. 6 residues coordinate ATP: Arg252, Arg267, Glu296, Phe336, Arg408, and Lys414.

This sequence belongs to the ATP-dependent DNA ligase family. Requires Mg(2+) as cofactor.

It catalyses the reaction ATP + (deoxyribonucleotide)n-3'-hydroxyl + 5'-phospho-(deoxyribonucleotide)m = (deoxyribonucleotide)n+m + AMP + diphosphate.. In terms of biological role, DNA ligase that seals nicks in double-stranded DNA during DNA replication, DNA recombination and DNA repair. This is DNA ligase from Methanosphaerula palustris (strain ATCC BAA-1556 / DSM 19958 / E1-9c).